A 417-amino-acid chain; its full sequence is Serine hydroxymethyltransferase (417 aa).

(6S)-5,6,7,8-tetrahydrofolate contacts are provided by residues leucine 121 and 125-127 (GHL). Lysine 230 carries the N6-(pyridoxal phosphate)lysine modification. (6S)-5,6,7,8-tetrahydrofolate is bound at residue 355–357 (SPF).

The protein belongs to the SHMT family. As to quaternary structure, homodimer. The cofactor is pyridoxal 5'-phosphate.

It localises to the cytoplasm. It carries out the reaction (6R)-5,10-methylene-5,6,7,8-tetrahydrofolate + glycine + H2O = (6S)-5,6,7,8-tetrahydrofolate + L-serine. It functions in the pathway one-carbon metabolism; tetrahydrofolate interconversion. Its pathway is amino-acid biosynthesis; glycine biosynthesis; glycine from L-serine: step 1/1. Its function is as follows. Catalyzes the reversible interconversion of serine and glycine with tetrahydrofolate (THF) serving as the one-carbon carrier. This reaction serves as the major source of one-carbon groups required for the biosynthesis of purines, thymidylate, methionine, and other important biomolecules. Also exhibits THF-independent aldolase activity toward beta-hydroxyamino acids, producing glycine and aldehydes, via a retro-aldol mechanism. In Nitrosococcus oceani (strain ATCC 19707 / BCRC 17464 / JCM 30415 / NCIMB 11848 / C-107), this protein is Serine hydroxymethyltransferase.